A 429-amino-acid chain; its full sequence is Ribosomal RNA small subunit methyltransferase B (429 aa).

S-adenosyl-L-methionine is bound by residues 254-260 (CAAPGGK), Asp277, Asp303, and Asp322. The Nucleophile role is filled by Cys375. The interval 397 to 419 (ALSETGTPDQPGQQNLPGGEEGD) is disordered. The span at 400–412 (ETGTPDQPGQQNL) shows a compositional bias: polar residues.

Belongs to the class I-like SAM-binding methyltransferase superfamily. RsmB/NOP family.

The protein localises to the cytoplasm. It carries out the reaction cytidine(967) in 16S rRNA + S-adenosyl-L-methionine = 5-methylcytidine(967) in 16S rRNA + S-adenosyl-L-homocysteine + H(+). In terms of biological role, specifically methylates the cytosine at position 967 (m5C967) of 16S rRNA. In Salmonella paratyphi A (strain ATCC 9150 / SARB42), this protein is Ribosomal RNA small subunit methyltransferase B.